The following is a 736-amino-acid chain: MKEMSANTVLDSQRQQKHYGITSPISLASPKEIDHIYTQKLIDAMKPFGVFEDEEELNHRLVVLGKLNNLVKEWISDVSESKNLPPSVVATVGGKIFTFGSYRLGVHTKGADIDALCVAPRHVERSDFFQSFFEKLKHQDGIRNLRAVEDAFVPVIKFEFDGIEIDLVFARLAIQTISDNLDLRDDSRLRSLDIRCIRSLNGCRVTDEILHLVPNKETFRLTLRAVKLWAKRRGIYSNMLGFLGGVSWAMLVARTCQLYPNAAASTLVHKFFLVFSKWEWPNPVLLKQPEESNLNLPVWDPRVNPSDRYHLMPIITPAYPQQNSTYNVSTSTRTVMVEEFKQGLAVTDEILQGKSDWSKLLEPPNFFQKYRHYIVLTASASTEENHLEWVGLVESKIRVLVGNLERNEFITLAHVNPQSFPGNKEHHKDNNYVSMWFLGIIFRRVENAESVNIDLTYDIQSFTDTVYRQANNINMLKEGMKIEATHVKKKQLHHYLPAEILQKKKKQSLSDVNRSSGGLQSKRLSLDSSCLDSSRDTDNGTPFNSPASKSDSPSVGETERNSAEPAAVIVEKPLSVPPAQGLSIPVIGAKVDSTVKTVSPPTVCTIPTVVGRNVIPRITTPHNPAQGQPHLNGMSNITKTVTPKRSHSPSIDGTPKRLKDVEKFIRLESTFKDPRTAEERKRKSVDAIGGESMPIPTIDTSRKKRLPSKELPDSSSPVPANNIRVIKNSIRLTLNR.

At Lys-2 the chain carries N6-acetyllysine. A phosphoserine mark is found at Ser-23 and Ser-29. ATP contacts are provided by residues 99–101 (FGS), Thr-108, 112–114 (DID), Asp-166, Lys-227, Tyr-236, and 245–246 (GV). Mg(2+) contacts are provided by Asp-112, Asp-114, and Asp-166. Residues 506 to 564 (KQSLSDVNRSSGGLQSKRLSLDSSCLDSSRDTDNGTPFNSPASKSDSPSVGETERNSAE) form a disordered region. Positions 509–519 (LSDVNRSSGGL) are enriched in polar residues. Low complexity predominate over residues 521 to 532 (SKRLSLDSSCLD). A Phosphoserine modification is found at Ser-525. The segment covering 539–555 (NGTPFNSPASKSDSPSV) has biased composition (polar residues). Phosphoserine occurs at positions 599 and 648. Position 654 is a phosphothreonine (Thr-654). The span at 673–685 (DPRTAEERKRKSV) shows a compositional bias: basic and acidic residues. Positions 673–720 (DPRTAEERKRKSVDAIGGESMPIPTIDTSRKKRLPSKELPDSSSPVPA) are disordered. Phosphoserine is present on residues Ser-684 and Ser-708.

The protein belongs to the poly(A) polymerase family. Requires Mg(2+) as cofactor. Mn(2+) serves as cofactor. In terms of tissue distribution, expressed predominantly in testis, and weakly in other tissues. Overexpressed in several tumors.

It is found in the nucleus. The catalysed reaction is RNA(n) + ATP = RNA(n)-3'-adenine ribonucleotide + diphosphate. Responsible for the post-transcriptional adenylation of the 3'-terminal of mRNA precursors and several small RNAs including signal recognition particle (SRP) RNA, nuclear 7SK RNA, U2 small nuclear RNA, and ribosomal 5S RNA. In Homo sapiens (Human), this protein is Poly(A) polymerase gamma.